We begin with the raw amino-acid sequence, 381 residues long: Flap endonuclease 1 (381 aa).

Residues 1–105 (MGVKGLNQLI…GELEKRLLKR (105 aa)) form an N-domain region. Aspartate 34 serves as a coordination point for Mg(2+). DNA contacts are provided by arginine 47 and arginine 71. Positions 87, 159, 161, 180, and 182 each coordinate Mg(2+). The interval 123-254 (EVMKFEKRLV…VTAYKLIKEH (132 aa)) is I-domain. DNA is bound at residue glutamate 159. Positions 232 and 234 each coordinate DNA. Aspartate 234 serves as a coordination point for Mg(2+). Residues 340–348 (VQGRLDGFF) are interaction with PCNA. The disordered stretch occupies residues 354–381 (PGAKAGDKKGDKKRGSDSKASNNKKKRK). Over residues 358-370 (AGDKKGDKKRGSD) the composition is skewed to basic and acidic residues.

This sequence belongs to the XPG/RAD2 endonuclease family. FEN1 subfamily. As to quaternary structure, interacts with PCNA. Three molecules of FEN1 bind to one PCNA trimer with each molecule binding to one PCNA monomer. PCNA stimulates the nuclease activity without altering cleavage specificity. The cofactor is Mg(2+). Phosphorylated. Phosphorylation upon DNA damage induces relocalization to the nuclear plasma.

It localises to the nucleus. The protein resides in the nucleolus. The protein localises to the nucleoplasm. It is found in the mitochondrion. Structure-specific nuclease with 5'-flap endonuclease and 5'-3' exonuclease activities involved in DNA replication and repair. During DNA replication, cleaves the 5'-overhanging flap structure that is generated by displacement synthesis when DNA polymerase encounters the 5'-end of a downstream Okazaki fragment. It enters the flap from the 5'-end and then tracks to cleave the flap base, leaving a nick for ligation. Also involved in the long patch base excision repair (LP-BER) pathway, by cleaving within the apurinic/apyrimidinic (AP) site-terminated flap. Acts as a genome stabilization factor that prevents flaps from equilibrating into structures that lead to duplications and deletions. Also possesses 5'-3' exonuclease activity on nicked or gapped double-stranded DNA, and exhibits RNase H activity. Also involved in replication and repair of rDNA and in repairing mitochondrial DNA. The sequence is that of Flap endonuclease 1 from Scheffersomyces stipitis (strain ATCC 58785 / CBS 6054 / NBRC 10063 / NRRL Y-11545) (Yeast).